The primary structure comprises 80 residues: Dolichol-phosphate mannose synthase subunit 2 (80 aa).

The next 2 helical transmembrane spans lie at 10–30 (LLLSSISLSIFTYYTFWVIIL) and 50–70 (ILVPVFAGIALLSLISVFIGM).

Belongs to the DPM2 family. In terms of assembly, component of the dolichol-phosphate mannose (DPM) synthase complex composed of DPMS1, DPMS2 and DPMS3; in the complex interacts directly with DPMS3. Associates with the GPI-GlcNAc transferase (GPI-GnT) complex.

The protein localises to the endoplasmic reticulum membrane. Its pathway is protein modification; protein glycosylation. In terms of biological role, regulates the biosynthesis of dolichol phosphate-mannose. Regulatory subunit of the dolichol-phosphate mannose (DPM) synthase complex; essential for the ER localization and stable expression of DPMS1. The sequence is that of Dolichol-phosphate mannose synthase subunit 2 from Arabidopsis thaliana (Mouse-ear cress).